A 258-amino-acid chain; its full sequence is Imidazole glycerol phosphate synthase subunit HisF (258 aa).

Active-site residues include D11 and D130.

This sequence belongs to the HisA/HisF family. In terms of assembly, heterodimer of HisH and HisF.

It is found in the cytoplasm. It catalyses the reaction 5-[(5-phospho-1-deoxy-D-ribulos-1-ylimino)methylamino]-1-(5-phospho-beta-D-ribosyl)imidazole-4-carboxamide + L-glutamine = D-erythro-1-(imidazol-4-yl)glycerol 3-phosphate + 5-amino-1-(5-phospho-beta-D-ribosyl)imidazole-4-carboxamide + L-glutamate + H(+). It participates in amino-acid biosynthesis; L-histidine biosynthesis; L-histidine from 5-phospho-alpha-D-ribose 1-diphosphate: step 5/9. Functionally, IGPS catalyzes the conversion of PRFAR and glutamine to IGP, AICAR and glutamate. The HisF subunit catalyzes the cyclization activity that produces IGP and AICAR from PRFAR using the ammonia provided by the HisH subunit. The chain is Imidazole glycerol phosphate synthase subunit HisF from Lachnoclostridium phytofermentans (strain ATCC 700394 / DSM 18823 / ISDg) (Clostridium phytofermentans).